The following is a 183-amino-acid chain: Cell division protein SepF (183 aa).

The segment at methionine 13 to glutamate 58 is disordered. Over residues aspartate 16–aspartate 36 the composition is skewed to acidic residues.

It belongs to the SepF family. As to quaternary structure, homodimer. Interacts with FtsZ.

It is found in the cytoplasm. Its function is as follows. Cell division protein that is part of the divisome complex and is recruited early to the Z-ring. Probably stimulates Z-ring formation, perhaps through the cross-linking of FtsZ protofilaments. Its function overlaps with FtsA. The sequence is that of Cell division protein SepF from Lachnospira eligens (strain ATCC 27750 / DSM 3376 / VPI C15-48 / C15-B4) (Eubacterium eligens).